The primary structure comprises 1017 residues: MNFIKENSQVLIQRMGMTVIKQILDELFVWNVMNYEEVNVICGEKFEQDAARGVIHMILKKGSEACNLFLKSLEKWNYPLFQELHGLSLFHQMSEEDLDDLAQELKYFYQSPSFLNFYPLGEDIDIMFNLKSTFTEPVLWKKDQHHHRLEQLTLSGLLDTLQSPCIIEGESGKGKSTLLQRIAMLWASGECQALTKFKLVFFLRLSRAQGGLFETLSDQLLDIPDVISKQTFMARLLKLRQRVLFLLDGYNEFKAQNCPEIEALIKENHRFKNMVIVTTTTESLRHIRQFGALIAEVGDMTESSAQALIQEVLRKEFAEDLLLQIQKSRCLRNLMKTPLFVVITCAIQMGKSEFHSHTQTTLFCTFYDLLINKNRHKRKGLAPSEVTQSLDHCGDLALEGVFSRRFDFEPDDLSNVNEDVLLTTGLLCKYTAQRFKPKYKFFHQSFQEYTAGRRLSSLLTSGEPAEVTKGNGHLQKMVSISDITSKYSNLLLYTCGSSAEATRTVLKHLSSVYQHGSLLGLSVTKRPLWRQESMQNMKSTTVQEILKAININSFTECGINLFHESISTSSLSKEFEDFFRGKSLYINSENIPDYLFDFFEDLPNCASALDFVKLDFYGGAVRDISGNQDQEFSGTYIPSRAVSLFFNWKQEFKTLDVTLRDFCKLSKKDIKYLEKIFSSATSLRLHIKRCVGMAGSLSSVLSTCKNIHSLIVEASPLTLEDEQHITSVTNLQTLGVHDLQIQRLPGGLTDNLGNLKNLMKLILDNIQMNEEDALKLAEGLTNLKKMCLLRLTHLSDIGEGMDYIVKSLSAEPCDLKEIQLVSCCLSGNAVKTLAQNLHNLARLSILDLSENHLEKDGKEALQQLIDRLHILEQLTVLMLPWCGDVRVSLARLLEQLERVPQLVKLGLKNWRLTDAEIRILGVFFEKNPLENFQQLDLAGNCVSSDGWLAFMSGFENLKELVFFDFSTKGLLPDASLVRKLSHVLSKLTFLQEVQLVGWQLDDDDVSVLKGAFKLVIA.

Positions 1-88 (MNFIKENSQV…PLFQELHGLS (88 aa)) constitute a CARD domain. Residues 95–298 (EEDLDDLAQE…QFGALIAEVG (204 aa)) are nucleotide-binding domain (NBD). One can recognise an NACHT domain in the interval 163 to 476 (SPCIIEGESG…VTKGNGHLQK (314 aa)). 169-176 (GESGKGKS) serves as a coordination point for ATP. Residues 356-463 (SHTQTTLFCT…RLSSLLTSGE (108 aa)) are winged-helix domain (WHD). Phosphoserine is present on Ser-533. LRR repeat units lie at residues 578–598 (FFRG…LFDF), 649–672 (KQEF…DIKY), 728–751 (VTNL…LTDN), 755–778 (LKNL…KLAE), 780–805 (LTNL…DYIV), 817–840 (EIQL…LHNL), 841–863 (ARLS…ALQQ), 871–895 (LEQL…LLEQ), 904–926 (KLGL…FFEK), 929–956 (LENF…GFEN), 958–978 (KELV…SLVR), and 992–1014 (EVQL…AFKL).

In terms of assembly, homooligomer; homooligomerizes following activation of Naip proteins by pathogenic proteins such as S.typhimurium (Salmonella) flagellin or PrgJ. Component of the NLRC4 inflammasome, at least composed of NLRC4, caspase-1 (CASP1) and some NAIP family member. Interacts with EIF2AK2/PKR. Phosphorylated at Ser-533 following infection of macrophages with S.typhimurium (Salmonella). Phosphorylation is essential for NLRC4 inflammasome function to promote caspase-1 activation and pyroptosis. PRKCD phosphorylates Ser-533 in vitro.

It is found in the cytoplasm. Its subcellular location is the cytosol. In terms of biological role, key component of inflammasomes that indirectly senses specific proteins from pathogenic bacteria and fungi and responds by assembling an inflammasome complex that promotes caspase-1 activation, cytokine production and macrophage pyroptosis. The NLRC4 inflammasome is activated as part of the innate immune response to a range of intracellular bacteria. The sequence is that of NLR family CARD domain-containing protein 4 (NLRC4) from Bos taurus (Bovine).